A 332-amino-acid polypeptide reads, in one-letter code: uncharacterized protein (332 aa).

A helical membrane pass occupies residues M185 to I205.

The protein resides in the host membrane. This is an uncharacterized protein from Sulfolobus islandicus filamentous virus (isolate Iceland/Hveragerdi) (SIFV).